A 474-amino-acid chain; its full sequence is tRNA-2-methylthio-N(6)-dimethylallyladenosine synthase (474 aa).

In terms of domain architecture, MTTase N-terminal spans 3–120 (KKLLIKTWGC…LPEMIKQSQS (118 aa)). Residues C12, C49, C83, C157, C161, and C164 each coordinate [4Fe-4S] cluster. One can recognise a Radical SAM core domain in the interval 143-375 (RAEGATAFVS…QQQINAQAMR (233 aa)). One can recognise a TRAM domain in the interval 378 to 441 (RLMLGTEQRV…ANSLRGEIVR (64 aa)).

The protein belongs to the methylthiotransferase family. MiaB subfamily. As to quaternary structure, monomer. The cofactor is [4Fe-4S] cluster.

The protein localises to the cytoplasm. The enzyme catalyses N(6)-dimethylallyladenosine(37) in tRNA + (sulfur carrier)-SH + AH2 + 2 S-adenosyl-L-methionine = 2-methylsulfanyl-N(6)-dimethylallyladenosine(37) in tRNA + (sulfur carrier)-H + 5'-deoxyadenosine + L-methionine + A + S-adenosyl-L-homocysteine + 2 H(+). In terms of biological role, catalyzes the methylthiolation of N6-(dimethylallyl)adenosine (i(6)A), leading to the formation of 2-methylthio-N6-(dimethylallyl)adenosine (ms(2)i(6)A) at position 37 in tRNAs that read codons beginning with uridine. The protein is tRNA-2-methylthio-N(6)-dimethylallyladenosine synthase of Vibrio vulnificus (strain CMCP6).